The chain runs to 78 residues: Neurogranin (78 aa).

Met-1 is subject to N-acetylmethionine. A disulfide bond links Cys-3 and Cys-51. Positions 26 to 47 constitute an IQ domain; it reads ANAAAAKIQASFRGHMARKKIK. At Ser-36 the chain carries Phosphoserine; by PHK and PKC. Positions 39 to 78 are disordered; the sequence is GHMARKKIKSGECGRKGPGPGGPGGAGGARGGAGGGPSGD. The 31-residue stretch at 48-78 folds into the Collagen-like domain; the sequence is SGECGRKGPGPGGPGGAGGARGGAGGGPSGD. Positions 54–78 are enriched in gly residues; it reads KGPGPGGPGGAGGARGGAGGGPSGD. Arg-68 is modified (citrulline; partial). At Arg-68 the chain carries Omega-N-methylarginine.

It belongs to the neurogranin family. Interacts with apo-calmodulin; this interaction decreases the affinity of calmodulin for calcium ions. Post-translationally, disulfide bond formation is redox-sensitive. The cysteine residues are readily oxidized by several nitric acid (NO) donors and other oxidants to form intramolecular disulfide. Cys-51 can form a disulfide with any other of the cysteine residues with an order of reactivity Cys-9 &gt; Cys-4 &gt; Cys-3. Phosphorylated at Ser-36 by PHK and PKC, phosphorylation prevents interaction with Calmodulin and interrupts several learning- and memory-associated functions.

The protein resides in the cytoplasm. The protein localises to the synapse. It localises to the cell projection. Its subcellular location is the dendritic spine. Functionally, regulates the affinity of calmodulin for calcium. Involved in synaptic plasticity and spatial learning. The chain is Neurogranin (Nrgn) from Mus musculus (Mouse).